The chain runs to 50 residues: Small ribosomal subunit protein uS14 (50 aa).

Zn(2+)-binding residues include Cys15, Cys18, Cys33, and Cys36.

The protein belongs to the universal ribosomal protein uS14 family. Zinc-binding uS14 subfamily. In terms of assembly, part of the 30S ribosomal subunit. It depends on Zn(2+) as a cofactor.

Functionally, binds 16S rRNA, required for the assembly of 30S particles. This Methanosarcina barkeri (strain Fusaro / DSM 804) protein is Small ribosomal subunit protein uS14.